A 412-amino-acid chain; its full sequence is MENNTNMFSGVKVIELANFIAAPAAGRFFADGGAEVIKIESPAGDPLRYTAPSEGRPLSQEENTTYDLENANKKAIVLNLKSEKGKKILHEMLAEADILLTNWRTKALVKQGLDYETLKEKYPKLVFAQITGYGEKGPDKDLPGFDYTAFFARGGVSGTLYEKGTVPPNVVPGLGDHQAGMFLAAGMAGALYKAKTTGQGDKVTVSLMHSAMYGLGIMIQAAQYKDHGLVYPINRNETPNPFIVSYKSKDDYFVQVCMPPYDVFYDRFMTALGREDLVGDERYNKIENLKDGRAKEVYSIIEQQMVTKTKDEWDNIFRDADIPFAIAQTWEDLLEDEQAWANDYLYKMKYPTGNERALVRLPVFFKEAGLPEYNQSPQIAENTVEVLKEMGYTEQEIEELEKDKDIMVRKEK.

N102 contributes to the CoA binding site. D176 serves as the catalytic Nucleophile.

As to quaternary structure, homodimer. Part of the heterotrimeric phenyllactate dehydratase complex FldABC, composed of (R)-phenyllactate CoA-transferase (FldA) and a heterodimeric (R)-phenyllactyl-CoA dehydratase (FldB and FldC).

It catalyses the reaction (E)-cinnamoyl-CoA + (R)-3-phenyllactate = (R)-3-phenyllactoyl-CoA + (E)-cinnamate. The protein operates within amino-acid degradation; L-phenylalanine degradation. Component of the phenyllactate dehydratase complex FldABC that is involved in the fermentation of L-phenylalanine via a Stickland reaction. This complex catalyzes the reversible syn-dehydration of (R)-phenyllactate to (E)-cinnamate in two steps, a CoA-transfer from cinnamoyl-CoA to phenyllactate, catalyzed by FldA, followed by the dehydration of phenyllactyl-CoA to cinnamoyl-CoA, catalyzed by FldB and FldC. In vitro, FldA can use 3-phenylpropanoate as a better CoA-acceptor than phenyllactate. This is Cinnamoyl-CoA:phenyllactate CoA-transferase from Clostridium sporogenes.